The following is a 420-amino-acid chain: Enolase (420 aa).

Gln162 contributes to the (2R)-2-phosphoglycerate binding site. Glu206 serves as the catalytic Proton donor. The Mg(2+) site is built by Asp241, Glu282, and Asp308. Lys333, Arg362, Ser363, and Lys384 together coordinate (2R)-2-phosphoglycerate. Lys333 acts as the Proton acceptor in catalysis.

This sequence belongs to the enolase family. The cofactor is Mg(2+).

It localises to the cytoplasm. Its subcellular location is the secreted. The protein resides in the cell surface. It carries out the reaction (2R)-2-phosphoglycerate = phosphoenolpyruvate + H2O. It participates in carbohydrate degradation; glycolysis; pyruvate from D-glyceraldehyde 3-phosphate: step 4/5. Functionally, catalyzes the reversible conversion of 2-phosphoglycerate (2-PG) into phosphoenolpyruvate (PEP). It is essential for the degradation of carbohydrates via glycolysis. The protein is Enolase of Methanothrix thermoacetophila (strain DSM 6194 / JCM 14653 / NBRC 101360 / PT) (Methanosaeta thermophila).